Reading from the N-terminus, the 89-residue chain is Small ribosomal subunit protein uS15 (89 aa).

The protein belongs to the universal ribosomal protein uS15 family. In terms of assembly, part of the 30S ribosomal subunit. Forms a bridge to the 50S subunit in the 70S ribosome, contacting the 23S rRNA.

In terms of biological role, one of the primary rRNA binding proteins, it binds directly to 16S rRNA where it helps nucleate assembly of the platform of the 30S subunit by binding and bridging several RNA helices of the 16S rRNA. Functionally, forms an intersubunit bridge (bridge B4) with the 23S rRNA of the 50S subunit in the ribosome. The sequence is that of Small ribosomal subunit protein uS15 from Leuconostoc citreum (strain KM20).